A 162-amino-acid polypeptide reads, in one-letter code: MSDKIGLFTGSFDPMTNGHLDMIERASRLFDKLYVGIFFNPHKQGFLPLENRKRGLEKAVKHLGNVKVVSSHDELVVDVAKRLGATCLVRGLRNASDLQYEASFDYYNHQLSSDIETIYLHSRPEHLYISSSGVRELLKFGQDIACYVPESILEEIRNEKKD.

S11 is a binding site for substrate. ATP contacts are provided by residues 11-12 (SF) and H19. Substrate is bound by residues K43, V76, and R90. ATP-binding positions include 91-93 (GLR), E101, and 126-132 (HLYISSS).

Belongs to the bacterial CoaD family. In terms of assembly, homohexamer. Mg(2+) is required as a cofactor.

Its subcellular location is the cytoplasm. The catalysed reaction is (R)-4'-phosphopantetheine + ATP + H(+) = 3'-dephospho-CoA + diphosphate. It functions in the pathway cofactor biosynthesis; coenzyme A biosynthesis; CoA from (R)-pantothenate: step 4/5. Functionally, reversibly transfers an adenylyl group from ATP to 4'-phosphopantetheine, yielding dephospho-CoA (dPCoA) and pyrophosphate. This Streptococcus pneumoniae (strain ATCC 700669 / Spain 23F-1) protein is Phosphopantetheine adenylyltransferase.